The chain runs to 132 residues: Small ribosomal subunit protein uS8 (132 aa).

Belongs to the universal ribosomal protein uS8 family. As to quaternary structure, part of the 30S ribosomal subunit. Contacts proteins S5 and S12.

Its function is as follows. One of the primary rRNA binding proteins, it binds directly to 16S rRNA central domain where it helps coordinate assembly of the platform of the 30S subunit. The chain is Small ribosomal subunit protein uS8 from Rickettsia canadensis (strain McKiel).